The sequence spans 459 residues: MSNFAIILAAGKGTRMKSDLPKVLHKVAGISMLEHVFRSVGAIQPEKTVTVVGHKAELVEEVLAEQTEFVTQSEQLGTGHAVMMTEPILEGLSGHTLVIAGDTPLITGESLKNLIDFHINHKNVATILTAETDNPFGYGRIVRNDNAEVLRIVEQKDATDFEKQIKEINTGTYVFDNERLFEALKNINTNNAQGEYYITDVIGIFRETGEKVGAYTLKDFDESLGVNDRVALATAESVMRRRINHKHMVNGVSFVNPEATYIDIDVEIAPEVQIEANVILKGQTKIGAETVLTNGTYVVDSTIGAGAVITNSMIEESSVADGVTVGPYAHIRPNSSLGAQVHIGNFVEVKGSSIGENTKAGHLTYIGNCEVGSNVNFGAGTITVNYDGKNKYKTVIGDNVFVGSNSTIIAPVELGDNSLVGAGSTITKDVPADAIAIGRGRQINKDEYATRLPHHPKNQ.

Residues 1–229 (MSNFAIILAA…FDESLGVNDR (229 aa)) are pyrophosphorylase. UDP-N-acetyl-alpha-D-glucosamine contacts are provided by residues 8–11 (LAAG), lysine 22, glutamine 72, and 77–78 (GT). Aspartate 102 provides a ligand contact to Mg(2+). Residues glycine 139, glutamate 154, asparagine 169, and asparagine 227 each contribute to the UDP-N-acetyl-alpha-D-glucosamine site. Asparagine 227 contributes to the Mg(2+) binding site. Residues 230-250 (VALATAESVMRRRINHKHMVN) are linker. Positions 251–459 (GVSFVNPEAT…TRLPHHPKNQ (209 aa)) are N-acetyltransferase. Positions 332 and 350 each coordinate UDP-N-acetyl-alpha-D-glucosamine. Residue histidine 362 is the Proton acceptor of the active site. UDP-N-acetyl-alpha-D-glucosamine-binding residues include tyrosine 365 and asparagine 376. Acetyl-CoA is bound by residues alanine 379, 385-386 (NY), serine 404, alanine 422, and arginine 439.

In the N-terminal section; belongs to the N-acetylglucosamine-1-phosphate uridyltransferase family. This sequence in the C-terminal section; belongs to the transferase hexapeptide repeat family. As to quaternary structure, homotrimer. The cofactor is Mg(2+).

Its subcellular location is the cytoplasm. It catalyses the reaction alpha-D-glucosamine 1-phosphate + acetyl-CoA = N-acetyl-alpha-D-glucosamine 1-phosphate + CoA + H(+). It carries out the reaction N-acetyl-alpha-D-glucosamine 1-phosphate + UTP + H(+) = UDP-N-acetyl-alpha-D-glucosamine + diphosphate. It functions in the pathway nucleotide-sugar biosynthesis; UDP-N-acetyl-alpha-D-glucosamine biosynthesis; N-acetyl-alpha-D-glucosamine 1-phosphate from alpha-D-glucosamine 6-phosphate (route II): step 2/2. It participates in nucleotide-sugar biosynthesis; UDP-N-acetyl-alpha-D-glucosamine biosynthesis; UDP-N-acetyl-alpha-D-glucosamine from N-acetyl-alpha-D-glucosamine 1-phosphate: step 1/1. Its pathway is bacterial outer membrane biogenesis; LPS lipid A biosynthesis. In terms of biological role, catalyzes the last two sequential reactions in the de novo biosynthetic pathway for UDP-N-acetylglucosamine (UDP-GlcNAc). The C-terminal domain catalyzes the transfer of acetyl group from acetyl coenzyme A to glucosamine-1-phosphate (GlcN-1-P) to produce N-acetylglucosamine-1-phosphate (GlcNAc-1-P), which is converted into UDP-GlcNAc by the transfer of uridine 5-monophosphate (from uridine 5-triphosphate), a reaction catalyzed by the N-terminal domain. This is Bifunctional protein GlmU from Streptococcus pneumoniae serotype 2 (strain D39 / NCTC 7466).